The chain runs to 300 residues: Homoserine kinase (300 aa).

Arg-82–Ala-92 is an ATP binding site.

The protein belongs to the GHMP kinase family. Homoserine kinase subfamily.

Its subcellular location is the cytoplasm. The catalysed reaction is L-homoserine + ATP = O-phospho-L-homoserine + ADP + H(+). The protein operates within amino-acid biosynthesis; L-threonine biosynthesis; L-threonine from L-aspartate: step 4/5. In terms of biological role, catalyzes the ATP-dependent phosphorylation of L-homoserine to L-homoserine phosphate. In Methanocella arvoryzae (strain DSM 22066 / NBRC 105507 / MRE50), this protein is Homoserine kinase.